Reading from the N-terminus, the 264-residue chain is Thiazole synthase (264 aa).

K98 (schiff-base intermediate with DXP) is an active-site residue. 1-deoxy-D-xylulose 5-phosphate-binding positions include G159, 185-186, and 207-208; these read AG and AS.

Belongs to the ThiG family. As to quaternary structure, homotetramer. Forms heterodimers with either ThiH or ThiS.

It localises to the cytoplasm. The catalysed reaction is [ThiS sulfur-carrier protein]-C-terminal-Gly-aminoethanethioate + 2-iminoacetate + 1-deoxy-D-xylulose 5-phosphate = [ThiS sulfur-carrier protein]-C-terminal Gly-Gly + 2-[(2R,5Z)-2-carboxy-4-methylthiazol-5(2H)-ylidene]ethyl phosphate + 2 H2O + H(+). Its pathway is cofactor biosynthesis; thiamine diphosphate biosynthesis. Catalyzes the rearrangement of 1-deoxy-D-xylulose 5-phosphate (DXP) to produce the thiazole phosphate moiety of thiamine. Sulfur is provided by the thiocarboxylate moiety of the carrier protein ThiS. In vitro, sulfur can be provided by H(2)S. The chain is Thiazole synthase from Streptomyces griseus subsp. griseus (strain JCM 4626 / CBS 651.72 / NBRC 13350 / KCC S-0626 / ISP 5235).